We begin with the raw amino-acid sequence, 241 residues long: DnaJ homolog subfamily B member 6 (241 aa).

Positions 2 to 146 (VDYYEVLGVQ…TGSFFSAFSG (145 aa)) are interaction with HSP70. Residues 3-69 (DYYEVLGVQR…KKRDIYDKYG (67 aa)) enclose the J domain. Positions 119–241 (FEDFFGNRRG…KEQLLRLDNK (123 aa)) are interaction with KRT18. Residue Arg-135 is modified to Omega-N-methylarginine.

As to quaternary structure, homooligomer. Interacts with BAG3, HSPB8 and STUB1. Interacts with ALKBH1. Interacts with HSP70, KRT18 and PTTG.

The protein localises to the cytoplasm. It is found in the perinuclear region. Its subcellular location is the nucleus. It localises to the myofibril. The protein resides in the sarcomere. The protein localises to the z line. Has a stimulatory effect on the ATPase activity of HSP70 in a dose-dependent and time-dependent manner and hence acts as a co-chaperone of HSP70. Plays an indispensable role in the organization of KRT8/KRT18 filaments. Acts as an endogenous molecular chaperone for neuronal proteins including huntingtin. Suppresses aggregation and toxicity of polyglutamine-containing, aggregation-prone proteins. Also reduces cellular toxicity and caspase-3 activity. The polypeptide is DnaJ homolog subfamily B member 6 (Macaca fascicularis (Crab-eating macaque)).